Here is a 354-residue protein sequence, read N- to C-terminus: Uroporphyrinogen decarboxylase (354 aa).

Residues 28–32, aspartate 78, tyrosine 155, serine 210, and histidine 325 contribute to the substrate site; that span reads RQAGR.

This sequence belongs to the uroporphyrinogen decarboxylase family. In terms of assembly, homodimer.

It localises to the cytoplasm. It catalyses the reaction uroporphyrinogen III + 4 H(+) = coproporphyrinogen III + 4 CO2. Its pathway is porphyrin-containing compound metabolism; protoporphyrin-IX biosynthesis; coproporphyrinogen-III from 5-aminolevulinate: step 4/4. Catalyzes the decarboxylation of four acetate groups of uroporphyrinogen-III to yield coproporphyrinogen-III. The sequence is that of Uroporphyrinogen decarboxylase from Crocosphaera subtropica (strain ATCC 51142 / BH68) (Cyanothece sp. (strain ATCC 51142)).